The sequence spans 336 residues: Fructose-1,6-bisphosphatase class 1 (336 aa).

E92, D115, L117, and D118 together coordinate Mg(2+). Substrate-binding positions include 118-121 (DGSS), N211, Y244, 262-264 (YLY), and K274. Mg(2+) is bound at residue E280.

This sequence belongs to the FBPase class 1 family. Homotetramer. The cofactor is Mg(2+).

It localises to the cytoplasm. The enzyme catalyses beta-D-fructose 1,6-bisphosphate + H2O = beta-D-fructose 6-phosphate + phosphate. It participates in carbohydrate biosynthesis; gluconeogenesis. The protein is Fructose-1,6-bisphosphatase class 1 of Vibrio atlanticus (strain LGP32) (Vibrio splendidus (strain Mel32)).